Reading from the N-terminus, the 291-residue chain is Small ribosomal subunit protein uS2 (291 aa).

The disordered stretch occupies residues 270 to 291 (NINEEANTEFEQALSDADEDKN).

Belongs to the universal ribosomal protein uS2 family.

The chain is Small ribosomal subunit protein uS2 from Rickettsia bellii (strain OSU 85-389).